Here is a 125-residue protein sequence, read N- to C-terminus: Mediator of RNA polymerase II transcription subunit 11 (125 aa).

The protein belongs to the Mediator complex subunit 11 family. As to quaternary structure, component of the Mediator complex.

It is found in the nucleus. Functionally, component of the Mediator complex, a coactivator involved in the regulated transcription of nearly all RNA polymerase II-dependent genes. Mediator functions as a bridge to convey information from gene-specific regulatory proteins to the basal RNA polymerase II transcription machinery. Mediator is recruited to promoters by direct interactions with regulatory proteins and serves as a scaffold for the assembly of a functional pre-initiation complex with RNA polymerase II and the general transcription factors. This Candida glabrata (strain ATCC 2001 / BCRC 20586 / JCM 3761 / NBRC 0622 / NRRL Y-65 / CBS 138) (Yeast) protein is Mediator of RNA polymerase II transcription subunit 11 (MED11).